The sequence spans 81 residues: Sulfur carrier protein TusA (81 aa).

Cysteine 19 (cysteine persulfide intermediate) is an active-site residue.

It belongs to the sulfur carrier protein TusA family. As to quaternary structure, interacts with IscS.

The protein localises to the cytoplasm. It participates in tRNA modification. Sulfur carrier protein involved in sulfur trafficking in the cell. Part of a sulfur-relay system required for 2-thiolation during synthesis of 2-thiouridine of the modified wobble base 5-methylaminomethyl-2-thiouridine (mnm(5)s(2)U) in tRNA. Interacts with IscS and stimulates its cysteine desulfurase activity. Accepts an activated sulfur from IscS, which is then transferred to TusD, and thus determines the direction of sulfur flow from IscS to 2-thiouridine formation. Also appears to be involved in sulfur transfer for the biosynthesis of molybdopterin. The sequence is that of Sulfur carrier protein TusA from Escherichia coli O17:K52:H18 (strain UMN026 / ExPEC).